A 1481-amino-acid polypeptide reads, in one-letter code: Structural protein ORF147 (1481 aa).

2 disordered regions span residues Ala65–Glu88 and Asp1319–Pro1403. 3 stretches are compositionally biased toward low complexity: residues Lys73–Ser84, Ser1323–Thr1336, and Ser1393–Pro1403.

It localises to the virion. The polypeptide is Structural protein ORF147 (Noctuidae (owlet moths)).